Consider the following 163-residue polypeptide: Adenosine 5'-monophosphoramidase HINT2 (163 aa).

The transit peptide at 1–17 (MAAAVVLAAGLRAARRA) directs the protein to the mitochondrion. The HIT domain occupies 55-163 (IFSRILDKSL…GGRQLQWPPG (109 aa)). AMP is bound by residues Ser63 and Asp80. The residue at position 119 (Lys119) is an N6-acetyllysine. Asn136 lines the AMP pocket. Position 139 is an N6-acetyllysine (Lys139). Residues 142–145 (AQSV) and 149–151 (HIH) each bind AMP. The short motif at 147–151 (HLHIH) is the Histidine triad motif element. His149 functions as the Tele-AMP-histidine intermediate in the catalytic mechanism.

It belongs to the HINT family. As to expression, high expression in liver and pancreas. Expression is significantly down-regulated in hepatocellular carcinoma (HCC) patients.

The protein resides in the mitochondrion. It catalyses the reaction adenosine 5'-phosphoramidate + H2O = AMP + NH4(+). In terms of biological role, exhibits adenosine 5'-monophosphoramidase activity, hydrolyzing purine nucleotide phosphoramidates with a single phosphate group such as adenosine 5'monophosphoramidate (AMP-NH2) to yield AMP and NH2. Hydrolyzes adenosine 5'-O-p-nitrophenylphosphoramidate (AMP-pNA). Hydrolyzes fluorogenic purine nucleoside tryptamine phosphoramidates in vitro. May be involved in steroid biosynthesis. May play a role in apoptosis. This chain is Adenosine 5'-monophosphoramidase HINT2, found in Homo sapiens (Human).